The sequence spans 305 residues: Serine/threonine-protein kinase 16 (305 aa).

A lipid anchor (N-myristoyl glycine) is attached at Gly2. S-palmitoyl cysteine attachment occurs at residues Cys6 and Cys8. The Protein kinase domain occupies 20–293 (YLFVQKLGEG…PVLLSQLEAL (274 aa)). Residues 26-34 (LGEGGFSYV) and Lys49 each bind ATP. Residue Asp148 is the Proton acceptor of the active site. The interval 166–202 (DLGSMNQACIQVEGSRQALALQDWAAQRCTISYRAPE) is activation loop. The residue at position 197 (Ser197) is a Phosphoserine; by autocatalysis. Tyr198 is modified (phosphotyrosine; by autocatalysis).

The protein belongs to the protein kinase superfamily. Ser/Thr protein kinase family. As to quaternary structure, monomer. Interacts with DRG1 (via its N-terminal); the interaction phosphorylates DRG1. Post-translationally, mainly autophosphorylated on serine/threonine residues. Also autophosphorylated on Tyr-198. In terms of tissue distribution, expressed in heart, liver, brain, spleen, lung, skeletal muscle, kidney and testis.

The protein localises to the cytoplasm. It is found in the perinuclear region. It localises to the membrane. It carries out the reaction L-seryl-[protein] + ATP = O-phospho-L-seryl-[protein] + ADP + H(+). It catalyses the reaction L-threonyl-[protein] + ATP = O-phospho-L-threonyl-[protein] + ADP + H(+). The enzyme catalyses L-tyrosyl-[protein] + ATP = O-phospho-L-tyrosyl-[protein] + ADP + H(+). In terms of biological role, membrane-associated protein kinase that phosphorylates on serine and threonine residues. In vitro substrates include DRG1, ENO1 and EIF4EBP1. Also autophosphorylates. May be involved in secretory vesicle trafficking or intracellular signaling. May have a role in regulating stromal-epithelial interactions that occur during ductal morphogenesis in the mammary gland. May be involved in TGF-beta signaling. Able to autophosphorylate on Tyr residue; it is however unclear whether it has tyrosine-protein kinase toward other proteins. The protein is Serine/threonine-protein kinase 16 (Stk16) of Rattus norvegicus (Rat).